We begin with the raw amino-acid sequence, 581 residues long: Sabinene synthase 1, chloroplastic (581 aa).

The transit peptide at 1–28 (MPLNSLHNLERKPSKAWSTSCTAPAARL) directs the protein to the chloroplast. Positions 297, 334, 338, 475, and 478 each coordinate (2E)-geranyl diphosphate. The Mg(2+) site is built by D334 and D338. The DDXXD motif motif lies at 334-338 (DDVYD). 3 residues coordinate Mg(2+): D478, T482, and E486.

Belongs to the terpene synthase family. Tpsb subfamily. It depends on Mg(2+) as a cofactor. Mn(2+) is required as a cofactor.

The protein localises to the plastid. It is found in the chloroplast. The catalysed reaction is (2E)-geranyl diphosphate = sabinene + diphosphate. It carries out the reaction (2E)-geranyl diphosphate = beta-myrcene + diphosphate. It functions in the pathway secondary metabolite biosynthesis; terpenoid biosynthesis. Functionally, monoterpene synthase (TPS) involved in the biosynthesis of monoterpene natural products, components of the chemical defense arsenal. Catalyzes the conversion of (2E)-geranyl diphosphate (GPP) into sabinene, and, as minor products, myrcene. This is Sabinene synthase 1, chloroplastic from Salvia pomifera (Apple sage).